The following is a 267-amino-acid chain: GTP cyclohydrolase FolE2 (267 aa).

It belongs to the GTP cyclohydrolase IV family.

It catalyses the reaction GTP + H2O = 7,8-dihydroneopterin 3'-triphosphate + formate + H(+). It participates in cofactor biosynthesis; 7,8-dihydroneopterin triphosphate biosynthesis; 7,8-dihydroneopterin triphosphate from GTP: step 1/1. Converts GTP to 7,8-dihydroneopterin triphosphate. The sequence is that of GTP cyclohydrolase FolE2 from Nitrosomonas eutropha (strain DSM 101675 / C91 / Nm57).